Reading from the N-terminus, the 81-residue chain is Dermaseptin-B2 (81 aa).

Residues 1–22 (MAFLKKSLFLVLFLGLVSLSIC) form the signal peptide. A propeptide spanning residues 23–43 (EEEKRENEDEEEQEDDEQSEM) is cleaved from the precursor. The disordered stretch occupies residues 24 to 46 (EEKRENEDEEEQEDDEQSEMKRG). The segment covering 30–40 (EDEEEQEDDEQ) has biased composition (acidic residues). Residues 54 to 55 (VG) are hinge region that separates the two alpha-helices that constitute the peptide. Val78 bears the Valine amide mark. A propeptide spanning residues 80–81 (EQ) is cleaved from the precursor.

In terms of processing, amidation permits an increased antimicrobial activity against some microorganisms such as T.album and S.cerevisiae. May contain a D-amino acid residue, since the natural peptide is not identical in chromatographic properties to the synthetic peptide. Expressed by the skin glands.

Its subcellular location is the secreted. It is found in the target cell membrane. Its function is as follows. Cationic amphipathic alpha-helical antimicrobial peptide with potent activity against Gram-negative and Gram-positive bacteria, fungi and protozoa. Acts in a synergistic effect in combination with Plasticin-B1 at doses that are not active alone. Acts by disturbing membrane functions. On model membranes, induces a strong perturbation of anionic lipid bilayers, resides at the hydrocarbon core-water interface, parallel to the plane of the membrane, and interacts preferentially with the polar head groups and glycerol backbone region of the anionic phospholipids, as well as the region of the lipid acyl chain near the bilayer surface. Induces a positive curvature of the bilayer and clustering of anionic lipids, consistent with a carpet mechanism, that may lead to the formation of mixed peptide-phospholipid toroidal, transient pores and membrane permeation/disruption once a threshold peptide accumulation is reached. Also enhances binding of agonists to adenosine A1 receptors (ADORA1), adenosine A2a receptors (ADORA2A), alpha-2 adrenergic receptors (ADRA2A) and 5-hydroxytryptamine 1A receptors (HTR1A). In addition, it enhances guanyl nucleotide exchange which may result in the conversion of receptors to a high affinity state complexed with guanyl nucleotide free G-protein. Affects human behavior eliciting profound malaise, followed by listlessness and then euphoria. Does not show cytotoxic activity on CHO cells. Does not act as a chemoattractant. Does not show hemolytic activity. This Phyllomedusa bicolor (Two-colored leaf frog) protein is Dermaseptin-B2 (ADR).